The following is a 205-amino-acid chain: Recombination protein RecR (205 aa).

The C4-type zinc-finger motif lies at 60-75 (CKVCHNISDTETCRIC). The Toprim domain maps to 83–178 (STICVVESIR…KLSVIARGIS (96 aa)).

This sequence belongs to the RecR family.

Its function is as follows. May play a role in DNA repair. It seems to be involved in an RecBC-independent recombinational process of DNA repair. It may act with RecF and RecO. This Phocaeicola vulgatus (strain ATCC 8482 / DSM 1447 / JCM 5826 / CCUG 4940 / NBRC 14291 / NCTC 11154) (Bacteroides vulgatus) protein is Recombination protein RecR.